The following is a 707-amino-acid chain: Probable potassium transporter 17 (707 aa).

The segment at 1–25 is disordered; the sequence is MDLEAGSIRPRSDGEGGGPAAGRET. At 1-34 the chain is on the cytoplasmic side; that stretch reads MDLEAGSIRPRSDGEGGGPAAGRETDDSNVWKDL. The helical transmembrane segment at 35 to 55 threads the bilayer; the sequence is FLAYKTLGVVFGGLVTSPLYV. Over 56 to 71 the chain is Extracellular; that stretch reads YPSMNLSSPTEADYLG. N-linked (GlcNAc...) asparagine glycosylation is present at Asn60. The chain crosses the membrane as a helical span at residues 72–92; sequence IYSIMFWTLTLIGVVKYVCIA. Over 93 to 157 the chain is Cytoplasmic; it reads LNADDHGEGG…FFEQSITARR (65 aa). A helical transmembrane segment spans residues 158 to 178; it reads VLLFVAVLGMCMLIGDGILTP. The Extracellular portion of the chain corresponds to 179–194; it reads AISVLSAIDGIRGPFP. The helical transmembrane segment at 195–215 threads the bilayer; sequence TVSKPVVEALSAAILIGLFLL. Over 216 to 222 the chain is Cytoplasmic; sequence QKYGTSK. A helical membrane pass occupies residues 223 to 243; it reads VSFLFSPIMAAWTFTTPIIGL. The Extracellular segment spans residues 244–276; sequence YSIVHYYPGIFKAISPYYIVHFFLRNKRQGWQL. Residues 277 to 297 traverse the membrane as a helical segment; that stretch reads LGGTVLCITGAEAMFADLGHF. At 298–305 the chain is on the cytoplasmic side; it reads SKKAIQIA. Residues 306–326 traverse the membrane as a helical segment; that stretch reads FLSSIYPSLVLTYAGQTAYLI. Residues 327–343 are Extracellular-facing; sequence NNVNDFGDGFYKFVPRP. Residues 344-364 traverse the membrane as a helical segment; sequence VYWPMFVVATLAAIVASQSLI. The Cytoplasmic portion of the chain corresponds to 365–402; that stretch reads SATFSVIKQSVVLDYFPRVKVVHTSQHKEGEVYSPEIN. The helical transmembrane segment at 403–423 threads the bilayer; that stretch reads YILMVLCVGVILGFGGGKAIG. Topologically, residues 424–427 are extracellular; sequence NAFG. A helical transmembrane segment spans residues 428 to 448; sequence VVVIMVMLITTVLLTLVMIII. The Cytoplasmic segment spans residues 449–454; the sequence is WRTPLV. The chain crosses the membrane as a helical span at residues 455–475; that stretch reads LAGLYFVPFFIMEGAYVSAVF. Residues 476–480 lie on the Extracellular side of the membrane; that stretch reads TKIPE. Residues 481–501 traverse the membrane as a helical segment; the sequence is GGWLPFAVSITLAMIMFGWYY. The Cytoplasmic segment spans residues 502–707; that stretch reads GRQRKFEYEM…RVEIGMLYKV (206 aa).

It belongs to the HAK/KUP transporter (TC 2.A.72.3) family.

It is found in the membrane. In terms of biological role, high-affinity potassium transporter. This Oryza sativa subsp. japonica (Rice) protein is Probable potassium transporter 17 (HAK17).